The sequence spans 439 residues: Xaa-Pro dipeptidase (439 aa).

Mn(2+) contacts are provided by aspartate 244, aspartate 255, histidine 335, glutamate 380, and glutamate 419.

It belongs to the peptidase M24B family. Bacterial-type prolidase subfamily. The cofactor is Mn(2+).

The catalysed reaction is Xaa-L-Pro dipeptide + H2O = an L-alpha-amino acid + L-proline. Functionally, splits dipeptides with a prolyl residue in the C-terminal position. The chain is Xaa-Pro dipeptidase from Shewanella oneidensis (strain ATCC 700550 / JCM 31522 / CIP 106686 / LMG 19005 / NCIMB 14063 / MR-1).